The chain runs to 62 residues: Protein YnfQ (62 aa).

The protein belongs to the YmcF/YnqF peptide family.

This chain is Protein YnfQ, found in Escherichia coli (strain K12).